We begin with the raw amino-acid sequence, 64 residues long: Conotoxin reg3.16 (64 aa).

Residues 1–19 (MSKLGVFLTICLLLFPLTA) form the signal peptide. Residues 20–49 (LQLDGDQPADKPAQRKLKILPKRKHWTRFT) constitute a propeptide that is removed on maturation. 3 disulfides stabilise this stretch: Cys50–Cys64, Cys51–Cys60, and Cys56–Cys63.

Belongs to the conotoxin M superfamily. In terms of tissue distribution, expressed by the venom duct.

It localises to the secreted. This chain is Conotoxin reg3.16, found in Conus regius (Crown cone).